Consider the following 338-residue polypeptide: tRNA dimethylallyltransferase (338 aa).

Position 13–20 (13–20) interacts with ATP; sequence GPTASGKT. Residue 15–20 coordinates substrate; that stretch reads TASGKT. 2 interaction with substrate tRNA regions span residues 38–41 and 162–166; these read DSTL and QRVSR.

Belongs to the IPP transferase family. As to quaternary structure, monomer. It depends on Mg(2+) as a cofactor.

It catalyses the reaction adenosine(37) in tRNA + dimethylallyl diphosphate = N(6)-dimethylallyladenosine(37) in tRNA + diphosphate. Its function is as follows. Catalyzes the transfer of a dimethylallyl group onto the adenine at position 37 in tRNAs that read codons beginning with uridine, leading to the formation of N6-(dimethylallyl)adenosine (i(6)A). The polypeptide is tRNA dimethylallyltransferase (Cellvibrio japonicus (strain Ueda107) (Pseudomonas fluorescens subsp. cellulosa)).